The sequence spans 34 residues: AEKDCIAPGAPCFGTDKPCCNPRAWCSSYANKCL.

3 cysteine pairs are disulfide-bonded: Cys-5–Cys-20, Cys-12–Cys-26, and Cys-19–Cys-33.

It is found in the secreted. Functionally, binds reversibly and blocks N-type voltage-gated calcium channels (Cav). This chain is Toxin Ptu1, found in Peirates turpis (Assassin bug).